We begin with the raw amino-acid sequence, 310 residues long: Lipoyl synthase (310 aa).

Cysteine 54, cysteine 59, cysteine 65, cysteine 80, cysteine 84, cysteine 87, and serine 295 together coordinate [4Fe-4S] cluster. The Radical SAM core domain maps to phenylalanine 66–methionine 284.

This sequence belongs to the radical SAM superfamily. Lipoyl synthase family. [4Fe-4S] cluster serves as cofactor.

It localises to the cytoplasm. The enzyme catalyses [[Fe-S] cluster scaffold protein carrying a second [4Fe-4S](2+) cluster] + N(6)-octanoyl-L-lysyl-[protein] + 2 oxidized [2Fe-2S]-[ferredoxin] + 2 S-adenosyl-L-methionine + 4 H(+) = [[Fe-S] cluster scaffold protein] + N(6)-[(R)-dihydrolipoyl]-L-lysyl-[protein] + 4 Fe(3+) + 2 hydrogen sulfide + 2 5'-deoxyadenosine + 2 L-methionine + 2 reduced [2Fe-2S]-[ferredoxin]. The protein operates within protein modification; protein lipoylation via endogenous pathway; protein N(6)-(lipoyl)lysine from octanoyl-[acyl-carrier-protein]: step 2/2. In terms of biological role, catalyzes the radical-mediated insertion of two sulfur atoms into the C-6 and C-8 positions of the octanoyl moiety bound to the lipoyl domains of lipoate-dependent enzymes, thereby converting the octanoylated domains into lipoylated derivatives. In Prochlorococcus marinus (strain MIT 9215), this protein is Lipoyl synthase.